The sequence spans 310 residues: MNRSPGEFQRYAKAFQKQLSKVQQTGGRGQVPSPRGAFAGLGGLLLLGGGALFINNALFNVDGGHRAIVYSRIHGVSSRIFNEGTHFIFPWLDTPIIYDVRAKPRNVASLTGTKDLQMVNITCRVLSRPDVVQLPTIYRTLGQDYDERVLPSIVNEVLKAVVAQFNASQLITQREKVSRLIRENLVRRASKFNILLDDVSITYMTFSPEFTNAVEAKQIAQQDAQRAAFVVDKARQEKQGMVVRAQGEAKSAELIGEAIKKSRDYVELKRLDTARDIAKILASSPNRVILDNEALLLNTVVDARIDGRGK.

The chain crosses the membrane as a helical; Signal-anchor for type II membrane protein span at residues 38 to 58 (FAGLGGLLLLGGGALFINNAL). Residues 130 to 144 (DVVQLPTIYRTLGQD) form an interaction with ATG8 region. Positions 138 to 141 (YRTL) match the AIM motif. Residues 212 to 253 (NAVEAKQIAQQDAQRAAFVVDKARQEKQGMVVRAQGEAKSAE) adopt a coiled-coil conformation.

Belongs to the prohibitin family. In terms of assembly, the mitochondrial prohibitin complex consists of two subunits (PHB1 and PHB2). The subunits assemble into a membrane-associated ring-shaped supercomplex of approximately 1 mDa. The mitochondrial prohibitin complex interacts with the m-AAA protease, a heterohexamer composed of YTA12/RCA1 and YTA10/AFG3. The mitochondrial prohibitin complex interacts with ATG8 and the interaction may support mitophagosome assembly. Post-translationally, the N-terminus is blocked.

The protein localises to the mitochondrion inner membrane. In terms of biological role, prohibitin probably acts as a holdase/unfoldase for the stabilization of newly synthesized mitochondrial proteins. Involved in mitophagy; may act as an adapter for ATG8 that supports mitophagosome assembly. Negatively regulates the proteolytic processing of ATG32 via the i-AAA protease. Acts as a negative regulator of the m-AAA protease. The polypeptide is Prohibitin-2 (PHB2) (Saccharomyces cerevisiae (strain ATCC 204508 / S288c) (Baker's yeast)).